Reading from the N-terminus, the 267-residue chain is Neutrophil elastase (267 aa).

Residues 1–27 (MTLGRRLACLFLACVLPALLLGGTALA) form the signal peptide. Positions 28–29 (SE) are excised as a propeptide. The Peptidase S1 domain occupies 30 to 247 (IVGGRRARPH…FVNWIDSIIQ (218 aa)). Cys-55 and Cys-71 form a disulfide bridge. Residue His-70 is the Charge relay system of the active site. N-linked (GlcNAc...) asparagine glycosylation occurs at Asn-88. Asp-117 functions as the Charge relay system in the catalytic mechanism. N-linked (GlcNAc...) asparagine glycosylation is found at Asn-124 and Asn-173. Disulfide bonds link Cys-151/Cys-208, Cys-181/Cys-187, and Cys-198/Cys-223. The active-site Charge relay system is the Ser-202.

Belongs to the peptidase S1 family. Elastase subfamily. Interacts with NOTCH2NL. Interacts with agaphelin, an antihemostatic protein from Anopheles gambiae. Bone marrow cells. Neutrophil.

It localises to the cytoplasmic vesicle. Its subcellular location is the phagosome. It catalyses the reaction Hydrolysis of proteins, including elastin. Preferential cleavage: Val-|-Xaa &gt; Ala-|-Xaa.. Its function is as follows. Serine protease that modifies the functions of natural killer cells, monocytes and granulocytes. Inhibits C5a-dependent neutrophil enzyme release and chemotaxis. Promotes cleavage of GSDMB, thereby inhibiting pyroptosis. Promotes blood coagulation. Through the activation of the platelet fibrinogen receptor integrin alpha-IIb/beta-3, potentiates platelet aggregation induced by a threshold concentration of cathepsin G (CTSG). Cleaves and thus inactivates tissue factor pathway inhibitor (TFPI). Capable of killing E.coli but not S.aureus in vitro; digests outer membrane protein A (ompA) in E.coli and K.pneumoniae. The sequence is that of Neutrophil elastase (ELANE) from Homo sapiens (Human).